The sequence spans 977 residues: DNA-directed RNA polymerase 3A, chloroplastic (977 aa).

Residues 1–72 constitute a chloroplast transit peptide; that stretch reads MASTASYSPS…NNIQSQTTVC (72 aa). Residues aspartate 678, lysine 753, and aspartate 910 contribute to the active site.

This sequence belongs to the phage and mitochondrial RNA polymerase family.

It is found in the plastid. Its subcellular location is the chloroplast. The enzyme catalyses RNA(n) + a ribonucleoside 5'-triphosphate = RNA(n+1) + diphosphate. Its function is as follows. DNA-dependent RNA polymerase catalyzes the transcription of DNA into RNA using the four ribonucleoside triphosphates as substrates. The chain is DNA-directed RNA polymerase 3A, chloroplastic (RPOT3-SYL) from Nicotiana tabacum (Common tobacco).